We begin with the raw amino-acid sequence, 300 residues long: F-box/LRR-repeat protein 15 (300 aa).

Methionine 1 carries the N-acetylmethionine modification. The F-box domain occupies 19–66 (LLDLPWEDVLLPHVLSRVPLRQLLWLQRVSRAFRALVQLHLARLRRFD). The interval 113-269 (NPQLRSVALA…EPSLSRLRKR (157 aa)) is interaction with SMURF1. LRR repeat units follow at residues 141 to 162 (RLQRLSLAHCDWVDGLALRGLA), 167 to 188 (ALEELDLTACRQLKDEAIVYLA), 194 to 215 (GLRNLSLAVNANVGDTAVQELA), 220 to 241 (ELQHLDLTGCLRVGSDGIRTLA), and 246 to 267 (ALRSLRVRHCHHVAEPSLSRLR).

This sequence belongs to the FBXL15 family. In terms of assembly, part of the SCF (SKP1-CUL1-F-box) E3 ubiquitin-protein ligase complex SCF(FBXL15) composed of CUL1, SKP1, RBX1 and FBXL15.

It localises to the cytoplasm. Its pathway is protein modification; protein ubiquitination. Functionally, substrate recognition component of a SCF (SKP1-CUL1-F-box protein) E3 ubiquitin-protein ligase complex which mediates the ubiquitination and subsequent proteasomal degradation of SMURF1, thereby acting as a positive regulator of the BMP signaling pathway. Required for dorsal/ventral pattern formation and bone mass maintenance. Also mediates ubiquitination of SMURF2 and WWP2. The chain is F-box/LRR-repeat protein 15 (FBXL15) from Bos taurus (Bovine).